A 418-amino-acid polypeptide reads, in one-letter code: Glutamyl-tRNA reductase (418 aa).

Residues 49-52 (TCNR), Ser109, 114-116 (EPQ), and Gln120 contribute to the substrate site. Cys50 acts as the Nucleophile in catalysis. NADP(+) is bound at residue 189 to 194 (GAGETI).

This sequence belongs to the glutamyl-tRNA reductase family. In terms of assembly, homodimer.

It catalyses the reaction (S)-4-amino-5-oxopentanoate + tRNA(Glu) + NADP(+) = L-glutamyl-tRNA(Glu) + NADPH + H(+). The protein operates within porphyrin-containing compound metabolism; protoporphyrin-IX biosynthesis; 5-aminolevulinate from L-glutamyl-tRNA(Glu): step 1/2. In terms of biological role, catalyzes the NADPH-dependent reduction of glutamyl-tRNA(Glu) to glutamate 1-semialdehyde (GSA). In Escherichia coli O6:K15:H31 (strain 536 / UPEC), this protein is Glutamyl-tRNA reductase.